The sequence spans 423 residues: Glucoside xylosyltransferase 2 (423 aa).

At 1 to 6 the chain is on the cytoplasmic side; that stretch reads MRFRWK. Residues 7–26 form a helical; Signal-anchor for type II membrane protein membrane-spanning segment; that stretch reads FFGSLLCVTGLLLVLYRQLG. Over 27 to 423 the chain is Lumenal; it reads NVPQPPPGPA…RVVVHIRSDV (397 aa). A disordered region spans residues 60-85; the sequence is RRDARQGGKKKTNWNNVRAPEQKPNP. N215 and N256 each carry an N-linked (GlcNAc...) asparagine glycan.

The protein belongs to the glycosyltransferase 8 family.

It localises to the membrane. It catalyses the reaction 3-O-(beta-D-glucosyl)-L-seryl-[EGF-like domain protein] + UDP-alpha-D-xylose = 3-O-[alpha-D-xylosyl-(1-&gt;3)-beta-D-glucosyl]-L-seryl-[EGF-like domain protein] + UDP + H(+). Its function is as follows. Glycosyltransferase which elongates the O-linked glucose attached to EGF-like repeats in the extracellular domain of Notch proteins by catalyzing the addition of xylose. This chain is Glucoside xylosyltransferase 2 (gxylt2), found in Xenopus laevis (African clawed frog).